We begin with the raw amino-acid sequence, 469 residues long: Probable Xaa-Pro aminopeptidase PEPP (469 aa).

Mn(2+) is bound by residues aspartate 257, aspartate 268, glutamate 391, and glutamate 436.

The protein belongs to the peptidase M24B family. The cofactor is Mn(2+).

It carries out the reaction Release of any N-terminal amino acid, including proline, that is linked to proline, even from a dipeptide or tripeptide.. Functionally, catalyzes the removal of a penultimate prolyl residue from the N-termini of peptides. The chain is Probable Xaa-Pro aminopeptidase PEPP (PEPP) from Fusarium vanettenii (strain ATCC MYA-4622 / CBS 123669 / FGSC 9596 / NRRL 45880 / 77-13-4) (Fusarium solani subsp. pisi).